Here is a 174-residue protein sequence, read N- to C-terminus: Streptothricin acetyltransferase (174 aa).

Residues 20-170 (FIVREVFDVH…AMYWYWFSGA (151 aa)) enclose the N-acetyltransferase domain.

Belongs to the acetyltransferase family. GNAT subfamily.

The enzyme catalyses streptothricin F + acetyl-CoA = N(beta)-acetylstreptothricin F + CoA + H(+). In terms of biological role, involved in resistance to streptothricin, a broad-spectrum antibiotic produced by streptomycetes. Detoxifies streptothricin via acetylation of the beta amino group of the first beta-lysyl moiety of streptothricin. The polypeptide is Streptothricin acetyltransferase (sat-1) (Escherichia coli).